We begin with the raw amino-acid sequence, 299 residues long: Leucine zipper transcription factor-like protein 1 (299 aa).

The stretch at Leu-96–Asp-299 forms a coiled coil. Residues Gly-145–Asp-299 form an interaction with BSS9 region.

Belongs to the LZTFL1 family. As to quaternary structure, self-associates. Interacts with BBS9; the interaction mediates the association of LZTL1 with the BBsome complex and regulates BBSome ciliary trafficking. In terms of tissue distribution, highly expressed in testis. Expressed in brain, cerebellum, eye, heart, kidney, liver, lung and trachea. In small intestine, graded expression along the crypt-villus axis with high levels in the villus apex and lower levels in the crypt stem cells (at protein level). Not expressed in skeletal muscle and white adipose tissue.

Its subcellular location is the cytoplasm. Functionally, regulates ciliary localization of the BBSome complex. Together with the BBSome complex, controls SMO ciliary trafficking and contributes to the sonic hedgehog (SHH) pathway regulation. May play a role in neurite outgrowth. May have tumor suppressor function. In Mus musculus (Mouse), this protein is Leucine zipper transcription factor-like protein 1 (Lztfl1).